Here is a 151-residue protein sequence, read N- to C-terminus: Large ribosomal subunit protein uL13 (151 aa).

The protein belongs to the universal ribosomal protein uL13 family. As to quaternary structure, part of the 50S ribosomal subunit.

Its function is as follows. This protein is one of the early assembly proteins of the 50S ribosomal subunit, although it is not seen to bind rRNA by itself. It is important during the early stages of 50S assembly. This Synechococcus elongatus (strain ATCC 33912 / PCC 7942 / FACHB-805) (Anacystis nidulans R2) protein is Large ribosomal subunit protein uL13.